A 117-amino-acid polypeptide reads, in one-letter code: NADH-ubiquinone oxidoreductase chain 3 (117 aa).

Transmembrane regions (helical) follow at residues isoleucine 4 to isoleucine 24, isoleucine 60 to isoleucine 80, and isoleucine 86 to histidine 106.

It belongs to the complex I subunit 3 family.

The protein localises to the mitochondrion membrane. The enzyme catalyses a ubiquinone + NADH + 5 H(+)(in) = a ubiquinol + NAD(+) + 4 H(+)(out). Core subunit of the mitochondrial membrane respiratory chain NADH dehydrogenase (Complex I) that is believed to belong to the minimal assembly required for catalysis. Complex I functions in the transfer of electrons from NADH to the respiratory chain. The immediate electron acceptor for the enzyme is believed to be ubiquinone. The protein is NADH-ubiquinone oxidoreductase chain 3 (mt:ND3) of Drosophila melanogaster (Fruit fly).